The sequence spans 316 residues: Beta-ketoacyl-[acyl-carrier-protein] synthase III 4 (316 aa).

Residues Cys-114 and His-242 contribute to the active site. An ACP-binding region spans residues 243-247; it reads QANLR. The active site involves Asn-272.

It belongs to the thiolase-like superfamily. FabH family. In terms of assembly, homodimer.

It localises to the cytoplasm. The enzyme catalyses malonyl-[ACP] + acetyl-CoA + H(+) = 3-oxobutanoyl-[ACP] + CO2 + CoA. It participates in lipid metabolism; fatty acid biosynthesis. In terms of biological role, catalyzes the condensation reaction of fatty acid synthesis by the addition to an acyl acceptor of two carbons from malonyl-ACP. Catalyzes the first condensation reaction which initiates fatty acid synthesis and may therefore play a role in governing the total rate of fatty acid production. Possesses both acetoacetyl-ACP synthase and acetyl transacylase activities. Its substrate specificity determines the biosynthesis of branched-chain and/or straight-chain of fatty acids. This chain is Beta-ketoacyl-[acyl-carrier-protein] synthase III 4, found in Streptomyces coelicolor (strain ATCC BAA-471 / A3(2) / M145).